Reading from the N-terminus, the 213-residue chain is Nucleolar protein 12 (213 aa).

The stretch at 33–96 (GFHKRKVERK…RLVTAKTESV (64 aa)) forms a coiled coil. Residues 109 to 213 (TISDLDLSGA…LTGKAQHSRE (105 aa)) are disordered. Acidic residues predominate over residues 130 to 139 (AGDESEEEAS). Over residues 170 to 182 (AHSRKKVKRKHPR) the composition is skewed to basic residues.

This sequence belongs to the RRP17 family. As to quaternary structure, interacts with KIAA1191.

The protein resides in the nucleus. It is found in the nucleolus. Its subcellular location is the cytoplasm. Multifunctional RNA binding protein that plays a role in RNA metabolism and DNA maintenance. Participates in the resolution of DNA stress and the maintenance of genome integrity by localizing to sites of DNA insults. Also plays a role in proper nucleolar organization by limiting nucleolar size and regulating nucleolar number. Mechanistically, regulates the nucleolar levels of fibrillarin and nucleolin, two key players in pre-rRNA processing and ribosome assembly. The polypeptide is Nucleolar protein 12 (NOL12) (Pongo abelii (Sumatran orangutan)).